Here is a 343-residue protein sequence, read N- to C-terminus: D-beta-hydroxybutyrate dehydrogenase, mitochondrial (343 aa).

The transit peptide at methionine 1 to tyrosine 46 directs the protein to the mitochondrion. Leucine 59–phenylalanine 83 serves as a coordination point for NAD(+). Lysine 73 is modified (N6-acetyllysine). An N6-acetyllysine; alternate modification is found at lysine 103. Lysine 103 is modified (N6-succinyllysine; alternate). Lysine 132 and lysine 177 each carry N6-acetyllysine. Serine 195 provides a ligand contact to substrate. The active-site Proton acceptor is tyrosine 208. An N6-acetyllysine modification is found at lysine 212. Serine 219 is a glycosylation site (O-linked (GlcNAc) serine). Serine 246 carries the post-translational modification Phosphoserine. Lysine 258 carries the N6-acetyllysine modification. Lysine 259 carries the N6-acetyllysine; alternate modification. Position 259 is an N6-succinyllysine; alternate (lysine 259). Lysine 280 is subject to N6-acetyllysine.

This sequence belongs to the short-chain dehydrogenases/reductases (SDR) family. As to quaternary structure, homotetramer. As to expression, expressed in liver.

It is found in the mitochondrion inner membrane. It localises to the mitochondrion matrix. The catalysed reaction is (R)-3-hydroxybutanoate + NAD(+) = acetoacetate + NADH + H(+). With respect to regulation, requires phosphatidylcholine as an allosteric activator for enzymatic activity. This Rattus norvegicus (Rat) protein is D-beta-hydroxybutyrate dehydrogenase, mitochondrial.